The chain runs to 279 residues: Protease HtpX homolog (279 aa).

2 helical membrane passes run 6 to 26 (VFVL…ALGG) and 29 to 49 (GAIL…WGSS). Zn(2+) is bound at residue His130. Glu131 is a catalytic residue. His134 is a Zn(2+) binding site. 2 helical membrane passes run 145 to 165 (IAAT…FFGG) and 176 to 196 (VAGI…QFAI). Glu201 lines the Zn(2+) pocket.

The protein belongs to the peptidase M48B family. It depends on Zn(2+) as a cofactor.

The protein localises to the cell inner membrane. This Gemmatimonas aurantiaca (strain DSM 14586 / JCM 11422 / NBRC 100505 / T-27) protein is Protease HtpX homolog.